The primary structure comprises 123 residues: Ribosome-binding factor A (123 aa).

Belongs to the RbfA family. Monomer. Binds 30S ribosomal subunits, but not 50S ribosomal subunits or 70S ribosomes.

The protein localises to the cytoplasm. In terms of biological role, one of several proteins that assist in the late maturation steps of the functional core of the 30S ribosomal subunit. Associates with free 30S ribosomal subunits (but not with 30S subunits that are part of 70S ribosomes or polysomes). Required for efficient processing of 16S rRNA. May interact with the 5'-terminal helix region of 16S rRNA. The protein is Ribosome-binding factor A of Variovorax paradoxus (strain S110).